Reading from the N-terminus, the 294-residue chain is MARPPASLGSQAPDRDRGEANVVTRVSQWADNHLRLVQNISTGMAIAGIMLLIRSVRLTSKFTTSSDIPVEFIRKKVKLRGRLQRITECGLEIEHIPITLPFISSWKEEPRGVLLVKLAGVELTESGKVWLQAELKPSQLLWFQLLGKEDSALFCYLLVNKGGYFNVNLNEEILRRGLGKTVLVKGLNYDSKTHWKIHRNLLKAELTALKKGEGIWKEESEKESYFRKLKDSWRERWTKDNDLKPAGADLGSTKDSYHDSRRRASGKGKDSVSNYSFFLKLREFVSRLHFWRKG.

Alanine 2 carries the post-translational modification N-acetylalanine. The helical transmembrane segment at 36–53 threads the bilayer; that stretch reads LVQNISTGMAIAGIMLLI. Positions 244-271 are disordered; it reads KPAGADLGSTKDSYHDSRRRASGKGKDS.

Its subcellular location is the membrane. Functionally, may play a role in transcription regulation. The chain is Protein C3orf33 homolog from Mus musculus (Mouse).